The following is a 253-amino-acid chain: Triosephosphate isomerase (253 aa).

Residue 8 to 10 (NWK) participates in substrate binding. The active-site Electrophile is His93. Glu165 (proton acceptor) is an active-site residue. Substrate is bound by residues Gly171, Ser210, and 231 to 232 (GG).

The protein belongs to the triosephosphate isomerase family. As to quaternary structure, homodimer.

It is found in the cytoplasm. It carries out the reaction D-glyceraldehyde 3-phosphate = dihydroxyacetone phosphate. The protein operates within carbohydrate biosynthesis; gluconeogenesis. It functions in the pathway carbohydrate degradation; glycolysis; D-glyceraldehyde 3-phosphate from glycerone phosphate: step 1/1. In terms of biological role, involved in the gluconeogenesis. Catalyzes stereospecifically the conversion of dihydroxyacetone phosphate (DHAP) to D-glyceraldehyde-3-phosphate (G3P). This Francisella tularensis subsp. tularensis (strain FSC 198) protein is Triosephosphate isomerase.